The primary structure comprises 147 residues: 3-dehydroquinate dehydratase (147 aa).

Tyrosine 23 (proton acceptor) is an active-site residue. Substrate is bound by residues asparagine 74, histidine 80, and aspartate 87. Residue histidine 100 is the Proton donor of the active site. Substrate contacts are provided by residues 101 to 102 and arginine 111; that span reads IS.

Belongs to the type-II 3-dehydroquinase family. In terms of assembly, homododecamer.

The enzyme catalyses 3-dehydroquinate = 3-dehydroshikimate + H2O. It participates in metabolic intermediate biosynthesis; chorismate biosynthesis; chorismate from D-erythrose 4-phosphate and phosphoenolpyruvate: step 3/7. Catalyzes a trans-dehydration via an enolate intermediate. The polypeptide is 3-dehydroquinate dehydratase (Prochlorococcus marinus (strain MIT 9215)).